We begin with the raw amino-acid sequence, 625 residues long: 1-deoxy-D-xylulose-5-phosphate synthase (625 aa).

Thiamine diphosphate-binding positions include His-80 and 121 to 123 (GHS). Asp-152 lines the Mg(2+) pocket. Thiamine diphosphate-binding positions include 153 to 154 (GA), Asn-181, Tyr-290, and Glu-371. Mg(2+) is bound at residue Asn-181.

It belongs to the transketolase family. DXPS subfamily. Homodimer. Mg(2+) is required as a cofactor. It depends on thiamine diphosphate as a cofactor.

It catalyses the reaction D-glyceraldehyde 3-phosphate + pyruvate + H(+) = 1-deoxy-D-xylulose 5-phosphate + CO2. The protein operates within metabolic intermediate biosynthesis; 1-deoxy-D-xylulose 5-phosphate biosynthesis; 1-deoxy-D-xylulose 5-phosphate from D-glyceraldehyde 3-phosphate and pyruvate: step 1/1. In terms of biological role, catalyzes the acyloin condensation reaction between C atoms 2 and 3 of pyruvate and glyceraldehyde 3-phosphate to yield 1-deoxy-D-xylulose-5-phosphate (DXP). The polypeptide is 1-deoxy-D-xylulose-5-phosphate synthase (Haemophilus influenzae (strain 86-028NP)).